The chain runs to 200 residues: Glycerol-3-phosphate acyltransferase (200 aa).

Transmembrane regions (helical) follow at residues 2–22 (FNIS…AVIV), 51–71 (KAAA…VLLA), 84–104 (AIAA…FFGF), 114–134 (LGVL…IWLV), and 159–179 (FFMP…LVLF).

Belongs to the PlsY family. As to quaternary structure, probably interacts with PlsX.

The protein resides in the cell inner membrane. It catalyses the reaction an acyl phosphate + sn-glycerol 3-phosphate = a 1-acyl-sn-glycero-3-phosphate + phosphate. It participates in lipid metabolism; phospholipid metabolism. In terms of biological role, catalyzes the transfer of an acyl group from acyl-phosphate (acyl-PO(4)) to glycerol-3-phosphate (G3P) to form lysophosphatidic acid (LPA). This enzyme utilizes acyl-phosphate as fatty acyl donor, but not acyl-CoA or acyl-ACP. The protein is Glycerol-3-phosphate acyltransferase of Neisseria meningitidis serogroup C (strain 053442).